The chain runs to 231 residues: Potassium/proton antiporter CemA (231 aa).

A run of 4 helical transmembrane segments spans residues 7–27 (FISL…SLSF), 116–136 (IISF…LIFL), 156–176 (ILLL…ELMI), and 191–211 (IISG…KYWI).

The protein belongs to the CemA family.

The protein localises to the plastid. It is found in the chloroplast inner membrane. It carries out the reaction K(+)(in) + H(+)(out) = K(+)(out) + H(+)(in). Contributes to K(+)/H(+) antiport activity by supporting proton efflux to control proton extrusion and homeostasis in chloroplasts in a light-dependent manner to modulate photosynthesis. Prevents excessive induction of non-photochemical quenching (NPQ) under continuous-light conditions. Indirectly promotes efficient inorganic carbon uptake into chloroplasts. This chain is Potassium/proton antiporter CemA, found in Morus indica (Mulberry).